A 187-amino-acid polypeptide reads, in one-letter code: MLSASDLRKGLKLDIEGSPYIIIDFDFSKPGKGQALYRCKMRNMITGNQLVKTYRSSDKFEKASLEERKMQFLYSQGEEYHFMDNENYDQLFITKDMLGDNIYFLQDNMDVDVLFFDEKPIDITLPIFVNLEVTRADPWVKGDTSGTDTKPITVETGYQLQVPPFVEQGDKIQIDTRTGQYVTRVKQ.

This sequence belongs to the elongation factor P family.

The protein localises to the cytoplasm. It functions in the pathway protein biosynthesis; polypeptide chain elongation. Its function is as follows. Involved in peptide bond synthesis. Stimulates efficient translation and peptide-bond synthesis on native or reconstituted 70S ribosomes in vitro. Probably functions indirectly by altering the affinity of the ribosome for aminoacyl-tRNA, thus increasing their reactivity as acceptors for peptidyl transferase. The protein is Elongation factor P of Desulfotalea psychrophila (strain LSv54 / DSM 12343).